The following is a 338-amino-acid chain: Methionine import ATP-binding protein MetN 1 (338 aa).

One can recognise an ABC transporter domain in the interval 2 to 241 (IQLENIEKHY…PNEKLTKDFI (240 aa)). Residue 38 to 45 (GYSGAGKS) coordinates ATP.

It belongs to the ABC transporter superfamily. Methionine importer (TC 3.A.1.24) family. In terms of assembly, the complex is composed of two ATP-binding proteins (MetN), two transmembrane proteins (MetI) and a solute-binding protein (MetQ).

The protein localises to the cell membrane. The catalysed reaction is L-methionine(out) + ATP + H2O = L-methionine(in) + ADP + phosphate + H(+). It carries out the reaction D-methionine(out) + ATP + H2O = D-methionine(in) + ADP + phosphate + H(+). Its function is as follows. Part of the ABC transporter complex MetNIQ involved in methionine import. Responsible for energy coupling to the transport system. The polypeptide is Methionine import ATP-binding protein MetN 1 (Oceanobacillus iheyensis (strain DSM 14371 / CIP 107618 / JCM 11309 / KCTC 3954 / HTE831)).